The chain runs to 3018 residues: Genome polyprotein (3018 aa).

S2 is modified (N-acetylserine; by host). The tract at residues 2-23 (STLPKPQRKTKRNTNRRPMDVK) is interaction with STAT1. An interaction with EIF2AK2/PKR region spans residues 2 to 58 (STLPKPQRKTKRNTNRRPMDVKFPGGGQIVGGVYLLPRKGPRLGVRATRKTSERSQP). The interval 2-59 (STLPKPQRKTKRNTNRRPMDVKFPGGGQIVGGVYLLPRKGPRLGVRATRKTSERSQPR) is interaction with DDX3X. Positions 2-75 (STLPKPQRKT…PKARQPQGRH (74 aa)) are disordered. The Cytoplasmic segment spans residues 2–168 (STLPKPQRKT…EDGINYATGN (167 aa)). Short sequence motifs (nuclear localization signal) lie at residues 5-13 (PKPQRKTKR) and 38-43 (PRKGPR). A compositionally biased stretch (basic residues) spans 7 to 16 (PQRKTKRNTN). S53 carries the phosphoserine; by host modification. 2 short sequence motifs (nuclear localization signal) span residues 58–64 (PRGRRQP) and 66–71 (PKARQP). Phosphoserine; by host occurs at positions 99 and 116. The interval 112–152 (PRRRSRNLGKVIDTLTCGFADLMWYIPVVGAPLGGVAAALA) is important for endoplasmic reticulum and mitochondrial localization. An interaction with APOA2 region spans residues 122–173 (VIDTLTCGFADLMWYIPVVGAPLGGVAAALAHGVRAIEDGINYATGNLPGCS). The tract at residues 164-167 (YATG) is important for lipid droplets localization. The helical transmembrane segment at 169 to 189 (LPGCSFSIFLLALLSCLTTPA) threads the bilayer. The propeptide at 178–191 (LLALLSCLTTPASA) is ER anchor for the core protein, removed in mature form by host signal peptidase. The Lumenal segment spans residues 190–358 (SALTYGNSSG…FGGHWGILLA (169 aa)). N-linked (GlcNAc...) asparagine; by host glycans are attached at residues N196, N209, N234, and N250. The interval 265 to 296 (LAGAAVVCSSLYIGDLCGSLFLAGQLFAFQPR) is important for fusion. N305 is a glycosylation site (N-linked (GlcNAc...) asparagine; by host). A helical transmembrane segment spans residues 359–379 (VAYFGMAGNWLKVLAVLFLFA). The Lumenal portion of the chain corresponds to 380-729 (GVEAQTMIAH…WEYIVLMFLV (350 aa)). The interval 385 to 411 (TMIAHGVSQTTSGFASLLTPGAKQNIQ) is HVR1. 3 N-linked (GlcNAc...) (high mannose) asparagine; by host glycosylation sites follow: N416, N422, and N429. Cystine bridges form between C428-C552, C451-C458, C486-C494, and C503-C508. N447 is a glycosylation site (N-linked (GlcNAc...) asparagine; by host). Positions 474 to 478 (KNVSG) are HVR2. Residue N475 is glycosylated (N-linked (GlcNAc...) asparagine; by host). The segment at 480-493 (SDDRPYCWHYAPRP) is CD81-binding 1. Residue N532 is glycosylated (N-linked (GlcNAc...) asparagine; by host). Positions 544–551 (PPTGGWFG) are CD81-binding 2. N556 is a glycosylation site (N-linked (GlcNAc...) asparagine; by host). A disulfide bridge links C564 with C569. An N-linked (GlcNAc...) asparagine; by host glycan is attached at N577. 3 disulfides stabilise this stretch: C585/C589, C601/C624, and C611/C648. N-linked (GlcNAc...) (high mannose) asparagine; by host glycosylation is found at N627 and N649. A disulfide bridge connects residues C656 and C681. Residues 664–675 (IEMSPLLFSTTQ) are PKR/eIF2-alpha phosphorylation homology domain (PePHD). A helical transmembrane segment spans residues 730 to 750 (LADARICTCLWLMLLISTVEA). The Lumenal segment spans residues 751 to 761 (AVERLVVLNAA). A helical transmembrane segment spans residues 762-782 (SAAGTAGWWWAVLFLCCVWYV). At 783-786 (KGRL) the chain is on the cytoplasmic side. A helical transmembrane segment spans residues 787 to 807 (VPACTYMALGMWPLLLTILAL). At 808-817 (PPRAYAMDNE) the chain is on the lumenal side. Residues 818 to 838 (QAASLGAVGLLVITIFSITPM) traverse the membrane as a helical segment. Over 839–885 (YKKLLNCFIWWNQYFLARAEAMVHEWVPDLRVRGGRDSIILLTCLLH) the chain is Cytoplasmic. A helical membrane pass occupies residues 886 to 906 (PQLGFEVTKILLAVLAPLYIL). The Lumenal portion of the chain corresponds to 907 to 932 (QYSLLKVPYFVRAHILLRACLLVRRL). One can recognise a Peptidase C18 domain in the interval 907-1030 (QYSLLKVPYF…DMQRGGWKLL (124 aa)). The interval 908–1210 (YSLLKVPYFV…PVENMETTMR (303 aa)) is protease NS2-3. C926 carries the S-palmitoyl cysteine; by host lipid modification. Residues 933-953 (AGGKYVQACLLRLGAWTGTFV) form a helical membrane-spanning segment. The tract at residues 933–953 (AGGKYVQACLLRLGAWTGTFV) is interaction with host SCPS1. The Cytoplasmic portion of the chain corresponds to 954 to 1661 (YDHLAPLSDW…CMSADLEVIT (708 aa)). Active-site for protease NS2 activity; shared with dimeric partner residues include H956, E976, and C997. One can recognise a Peptidase S29 domain in the interval 1031 to 1212 (APITAYAQQT…ENMETTMRSP (182 aa)). Active-site charge relay system; for serine protease NS3 activity residues include H1087 and D1111. 2 residues coordinate Zn(2+): C1127 and C1129. The active-site Charge relay system; for serine protease NS3 activity is the S1169. Zn(2+) contacts are provided by C1175 and H1179. 1234 to 1241 (APTGSGKS) provides a ligand contact to ATP. Mg(2+)-binding residues include S1241 and E1321. Residues 1320–1323 (DECH) carry the DECH box motif. The tract at residues 1490–1502 (QRRGRTGRGKPGV) is RNA-binding. A helical membrane pass occupies residues 1662-1682 (STWVLVGGVLAALAAYCLSVG). The NS3-binding stretch occupies residues 1683–1694 (CVVICGRITLTG). Topologically, residues 1683 to 1809 (CVVICGRITL…SLTSPLRTSQ (127 aa)) are cytoplasmic. The helical transmembrane segment at 1810-1830 (TLLLNILGGWIAAQVAPPPAS) threads the bilayer. At 1831-1832 (TA) the chain is on the lumenal side. The chain crosses the membrane as a helical span at residues 1833-1853 (FVVSGLAGAAVGSIRLGRVLV). Position 1854 (D1854) is a topological domain, cytoplasmic. The chain crosses the membrane as a helical span at residues 1855 to 1875 (VLAGYGAGVSGALVAFKIMSG). Topologically, residues 1876 to 1885 (ECPSTEDMVN) are lumenal. A helical transmembrane segment spans residues 1886–1906 (LLPALLSPGVALVGVVCAAIL). At 1907 to 1976 (RRHVGPAEGA…WVNEDTATPC (70 aa)) the chain is on the cytoplasmic side. C1976 carries the S-palmitoyl cysteine; by host lipid modification. An intramembrane segment occupies 1977-2006 (ATSWLRDVWDWVCTVLSDFKVWLQAKLFPR). Residues 2007 to 2997 (LPGIPFLSCQ…YHSVSQARPR (991 aa)) are Cytoplasmic-facing. C2015, C2033, C2035, and C2056 together coordinate Zn(2+). The segment at 2124–2212 (EFFTEVDGVR…ASSSANQLSA (89 aa)) is FKBP8-binding. The interval 2124–2337 (EFFTEVDGVR…PVPPPRRKRL (214 aa)) is transcriptional activation. Positions 2139–2143 (PPCKP) are interaction with non-structural protein 4A. Residues 2192 to 2215 (RRLKKGSPPSLASSSANQLSAPSL) are disordered. Residues 2193-2445 (RLKKGSPPSL…ALITPCAAEE (253 aa)) form an interaction with host SKP2 region. S2198, S2201, S2205, S2211, and S2214 each carry phosphoserine; by host. Residues 2198–2215 (SPPSLASSSANQLSAPSL) are compositionally biased toward low complexity. The interval 2214–2253 (SLRATCTTSQKHPEMELLQANLLWKHEMGSHIPRVQSENK) is ISDR. The tract at residues 2214–2279 (SLRATCTTSQ…REISVSVECH (66 aa)) is interaction with EIF2AK2/PKR. The tract at residues 2253–2311 (KVVVLDSFELYPLEYEEREISVSVECHRQPRCKFPPVFPVWARPDNNPPFIQAWQMPGY) is NS4B-binding. The interval 2304–2382 (QAWQMPGYEP…SITSPVPPDP (79 aa)) is V3. The short motif at 2327-2330 (APVP) is the SH3-binding element. The Nuclear localization signal motif lies at 2332–2340 (PRRKRLVHL). A Glycyl lysine isopeptide (Lys-Gly) (interchain with G-Cter in ubiquitin) cross-link involves residue K2355. Residues 2359–2417 (ESSNDPGPSSDSGLSITSPVPPDPTTPEDAGSEAESYSSMPPLEGEPGDPDLSSGSWST) are disordered. The span at 2360-2373 (SSNDPGPSSDSGLS) shows a compositional bias: low complexity. S2456 and S2469 each carry phosphoserine; by host. One can recognise a RdRp catalytic domain in the interval 2641–2759 (PMGFSYDTRC…ICESAGVQED (119 aa)). Residues D2647, D2745, and D2746 each contribute to the Mg(2+) site. Residues 2998-3018 (FLLLGLLLLTVGVGIFLLPAR) traverse the membrane as a helical segment.

The protein belongs to the hepacivirus polyprotein family. Homooligomer. Interacts with E1 (via C-terminus). Interacts with the non-structural protein 5A. Interacts (via N-terminus) with host STAT1 (via SH2 domain); this interaction results in decreased STAT1 phosphorylation and ubiquitin-mediated proteasome-dependent STAT1 degradation, leading to decreased IFN-stimulated gene transcription. Interacts with host STAT3; this interaction constitutively activates STAT3. Interacts with host LTBR receptor. Interacts with host TNFRSF1A receptor and possibly induces apoptosis. Interacts with host HNRPK. Interacts with host YWHAE. Interacts with host UBE3A/E6AP. Interacts with host DDX3X. Interacts with host APOA2. Interacts with host RXRA protein. Interacts with host SP110 isoform 3/Sp110b; this interaction sequesters the transcriptional corepressor SP110 away from the nucleus. Interacts with host CREB3 nuclear transcription protein; this interaction triggers cell transformation. Interacts with host ACY3. Interacts with host C1QR1. Interacts with host RBM24; this interaction, which enhances the interaction of the mature core protein with 5'-UTR, may inhibit viral translation and favor replication. Interacts with host EIF2AK2/PKR; this interaction induces the autophosphorylation of EIF2AK2. Part of the viral assembly initiation complex composed of NS2, E1, E2, NS3, NS4A, NS5A and the mature core protein. As to quaternary structure, forms a heterodimer with envelope glycoprotein E2. Interacts with mature core protein. Interacts with protease NS2. The heterodimer E1/E2 interacts with host CLDN1; this interaction plays a role in viral entry into host cell. Interacts with host SPSB2 (via C-terminus). Part of the viral assembly initiation complex composed of NS2, E1, E2, NS3, NS4A, NS5A and the mature core protein. Interacts with host NEURL3; this interaction prevents E1 binding to glycoprotein E2. In terms of assembly, forms a heterodimer with envelope glycoprotein E1. Interacts with host CD81 and SCARB1 receptors; these interactions play a role in viral entry into host cell. Interacts with host EIF2AK2/PKR; this interaction inhibits EIF2AK2 and probably allows the virus to evade the innate immune response. Interacts with host CD209/DC-SIGN and CLEC4M/DC-SIGNR. Interact with host SPCS1; this interaction is essential for viral particle assembly. Interacts with protease NS2. The heterodimer E1/E2 interacts with host CLDN1; this interaction plays a role in viral entry into host cell. Part of the viral assembly initiation complex composed of NS2, E1, E2, NS3, NS4A, NS5A and the mature core protein. Interacts with host SLC3A2/4F2hc; the interaction may facilitate viral entry into host cell. Interacts with human PLSCR1. Homohexamer. Homoheptamer. Interacts with protease NS2. As to quaternary structure, homodimer. Interacts with host SPCS1; this interaction is essential for viral particle assembly. Interacts with envelope glycoprotein E1. Interacts with envelope glycoprotein E2. Interacts with viroporin p7. Interacts with serine protease/helicase NS3. Part of the replication complex composed of NS2, NS3, NS4A, NS4B, NS5A and the RNA-directed RNA polymerase embedded in an ER-derived membranous web. Part of the viral assembly initiation complex composed of NS2, E1, E2, NS3, NS4A, NS5A and the mature core protein. In terms of assembly, interacts with protease NS2. Interacts with non-structural protein 4A; this interaction stabilizes the folding of NS3 serine protease. NS3-NS4A interaction is essential for NS3 activation and allows membrane anchorage of the latter. NS3/NS4A complex also prevents phosphorylation of host IRF3, thus preventing the establishment of dsRNA induced antiviral state. Interacts with host MAVS; this interaction leads to the cleavage and inhibition of host MAVS. Interacts with host TICAM1; this interaction leads to the cleavage and inhibition of host TICAM1. Interacts with host TANK-binding kinase/TBK1; this interaction results in the inhibition of the association between TBK1 and IRF3, which leads to the inhibition of IRF3 activation. Interacts with host RBM24. Part of the replication complex composed of NS2, NS3, NS4A, NS4B, NS5A and the RNA-directed RNA polymerase embedded in an ER-derived membranous web. Part of the viral assembly initiation complex composed of NS2, E1, E2, NS3, NS4A, NS5A and the mature core protein. Interacts with NS3 serine protease; this interaction stabilizes the folding of NS3 serine protease. NS3-NS4A interaction is essential for NS3 activation and allows membrane anchorage of the latter. Interacts with non-structural protein 5A (via N-terminus). Part of the replication complex composed of NS2, NS3, NS4A, NS4B, NS5A and the RNA-directed RNA polymerase embedded in an ER-derived membranous web. Part of the viral assembly initiation complex composed of NS2, E1, E2, NS3, NS4A, NS5A and the mature core protein. As to quaternary structure, homomultimer. Interacts with non-structural protein NS5A. Interacts with host PLA2G4C; this interaction likely initiates the recruitment of replication complexes to lipid droplets. Interacts with host STING; this interaction disrupts the interaction between STING and TBK1 thereby suppressing the interferon signaling. Part of the replication complex composed of NS2, NS3, NS4A, NS4B, NS5A and the RNA-directed RNA polymerase embedded in an ER-derived membranous web. In terms of assembly, monomer. Homodimer; dimerization is required for RNA-binding. Interacts with the mature core protein. Interacts (via N-terminus) with non-structural protein 4A. Interacts with non-structural protein 4B. Interacts (via region D2) with RNA-directed RNA polymerase. Part of the viral assembly initiation complex composed of NS2, E1, E2, NS3, NS4A, NS5A and the mature core protein. Part of the replication complex composed of NS2, NS3, NS4A, NS4B, NS5A and the RNA-directed RNA polymerase embedded in an ER-derived membranous web. Interacts with host GRB2. Interacts with host BIN1. Interacts with host PIK3R1. Interacts with host SRCAP. Interacts with host FKBP8. Interacts (via C-terminus) with host VAPB (via MSP domain). Interacts with host EIF2AK2/PKR; this interaction leads to disruption of EIF2AK2 dimerization by NS5A and probably allows the virus to evade the innate immune response. Interacts (via N-terminus) with host PACSIN2 (via N-terminus); this interaction attenuates protein kinase C alpha-mediated phosphorylation of PACSIN2 by disrupting the interaction between PACSIN2 and PRKCA. Interacts (via N-terminus) with host SRC kinase (via SH2 domain). Interacts with most Src-family kinases. Interacts with host IFI27 and SKP2; promotes the ubiquitin-mediated proteasomal degradation of NS5A. Interacts with host GPS2. Interacts with host TNFRSF21; this interaction allows the modulation by the virus of JNK, p38 MAPK, STAT3, and Akt signaling pathways in a DR6-dependent manner. Interacts (via N-terminus) with host CIDEB (via N-terminus); this interaction seems to regulate the association of HCV particles with APOE. Interacts with host CHKA/Choline Kinase-alpha; CHKA bridges host PI4KA and NS5A and potentiates NS5A-stimulated PI4KA activity, which then facilitates the targeting of the ternary complex to the ER for viral replication. Interacts with host SPSB2 (via C-terminus); this interaction targets NS5A for ubiquitination and degradation. Interacts with host RAB18; this interaction may promote the association of NS5A and other replicase components with lipid droplets. Interacts (via region D2) with host PPIA/CYPA; the interaction stimulates RNA-binding ability of NS5A and is dependent on the peptidyl-prolyl cis-trans isomerase activity of PPIA/CYPA. Interacts with host TRIM14; this interaction induces the degradation of NS5A. Homooligomer. Interacts with non-structural protein 5A. Interacts with host VAPB. Interacts with host PRK2/PKN2. Interacts with host HNRNPA1 and SEPT6; these interactions facilitate viral replication. Part of the replication complex composed of NS2, NS3, NS4A, NS4B, NS5A and the RNA-directed RNA polymerase. Zn(2+) serves as cofactor. The cofactor is Mg(2+). In terms of processing, specific enzymatic cleavages in vivo yield mature proteins. The structural proteins, core, E1, E2 and p7 are produced by proteolytic processing by host signal peptidases. The core protein precursor is synthesized as a 23 kDa, which is retained in the ER membrane through the hydrophobic signal peptide. Cleavage by the signal peptidase releases the 21 kDa mature core protein. The cleavage of the core protein precursor occurs between aminoacids 176 and 188 but the exact cleavage site is not known. Some degraded forms of the core protein appear as well during the course of infection. The other proteins (p7, NS2, NS3, NS4A, NS4B, NS5A and NS5B) are cleaved by the viral proteases. Autoprocessing between NS2 and NS3 is mediated by the NS2 cysteine protease catalytic domain and regulated by the NS3 N-terminal domain. Post-translationally, phosphorylated by host PKC and PKA. Ubiquitinated; mediated by UBE3A and leading to core protein subsequent proteasomal degradation. In terms of processing, highly N-glycosylated. Post-translationally, palmitoylation is required for NS2/3 autoprocessing and E2 recruitment to membranes. Palmitoylated. This modification may play a role in its polymerization or in protein-protein interactions. In terms of processing, phosphorylated on serines in a basal form termed p56. p58 is a hyperphosphorylated form of p56. p56 and p58 coexist in the cell in roughly equivalent amounts. Hyperphosphorylation is dependent on the presence of NS4A. Host CSNK1A1/CKI-alpha or RPS6KB1 kinases may be responsible for NS5A phosphorylation. Post-translationally, tyrosine phosphorylation is essential for the interaction with host SRC. The N-terminus is phosphorylated by host PRK2/PKN2.

The protein localises to the host endoplasmic reticulum membrane. It is found in the host mitochondrion membrane. Its subcellular location is the virion. The protein resides in the host cytoplasm. It localises to the host nucleus. The protein localises to the host lipid droplet. It is found in the virion membrane. Its subcellular location is the host mitochondrion. The protein resides in the host cell membrane. It localises to the host perinuclear region. It carries out the reaction Hydrolysis of four peptide bonds in the viral precursor polyprotein, commonly with Asp or Glu in the P6 position, Cys or Thr in P1 and Ser or Ala in P1'.. It catalyses the reaction a ribonucleoside 5'-triphosphate + H2O = a ribonucleoside 5'-diphosphate + phosphate + H(+). The catalysed reaction is ATP + H2O = ADP + phosphate + H(+). The enzyme catalyses RNA(n) + a ribonucleoside 5'-triphosphate = RNA(n+1) + diphosphate. Its activity is regulated as follows. Inhibited by the antiviral drug hexamethylene amiloride. Inhibition by amantadine appears to be genotype-dependent. Also inhibited by long-alkyl-chain iminosugar derivatives. With respect to regulation, activity is up-regulated by PRK2/PKN2-mediated phosphorylation. In terms of biological role, packages viral RNA to form a viral nucleocapsid, and promotes virion budding. Participates in the viral particle production as a result of its interaction with the non-structural protein 5A. Binds RNA and may function as a RNA chaperone to induce the RNA structural rearrangements taking place during virus replication. Modulates viral translation initiation by interacting with viral IRES and 40S ribosomal subunit. Affects various cell signaling pathways, host immunity and lipid metabolism. Prevents the establishment of cellular antiviral state by blocking the interferon-alpha/beta (IFN-alpha/beta) and IFN-gamma signaling pathways and by blocking the formation of phosphorylated STAT1 and promoting ubiquitin-mediated proteasome-dependent degradation of STAT1. Activates STAT3 leading to cellular transformation. Regulates the activity of cellular genes, including c-myc and c-fos. May repress the promoter of p53, and sequester CREB3 and SP110 isoform 3/Sp110b in the cytoplasm. Represses cell cycle negative regulating factor CDKN1A, thereby interrupting an important check point of normal cell cycle regulation. Targets transcription factors involved in the regulation of inflammatory responses and in the immune response: suppresses TNF-induced NF-kappa-B activation, and activates AP-1. Binds to dendritic cells (DCs) via C1QR1, resulting in down-regulation of T-lymphocytes proliferation. Alters lipid metabolism by interacting with hepatocellular proteins involved in lipid accumulation and storage. Induces up-regulation of FAS promoter activity, and thereby contributes to the increased triglyceride accumulation in hepatocytes (steatosis). Forms a heterodimer with envelope glycoprotein E2, which mediates virus attachment to the host cell, virion internalization through clathrin-dependent endocytosis and fusion with host membrane. Fusion with the host cell is most likely mediated by both E1 and E2, through conformational rearrangements of the heterodimer required for fusion rather than a classical class II fusion mechanism. E1/E2 heterodimer binds host apolipoproteins such as APOB and ApoE thereby forming a lipo-viro-particle (LVP). APOE associated to the LVP allows the initial virus attachment to cell surface receptors such as the heparan sulfate proteoglycans (HSPGs), syndecan-1 (SDC1), syndecan-1 (SDC2), the low-density lipoprotein receptor (LDLR) and scavenger receptor class B type I (SCARB1). The cholesterol transfer activity of SCARB1 allows E2 exposure and binding of E2 to SCARB1 and the tetraspanin CD81. E1/E2 heterodimer binding on CD81 activates the epithelial growth factor receptor (EGFR) signaling pathway. Diffusion of the complex E1-E2-EGFR-SCARB1-CD81 to the cell lateral membrane allows further interaction with Claudin 1 (CLDN1) and occludin (OCLN) to finally trigger HCV entry. Functionally, forms a heterodimer with envelope glycoprotein E1, which mediates virus attachment to the host cell, virion internalization through clathrin-dependent endocytosis and fusion with host membrane. Fusion with the host cell is most likely mediated by both E1 and E2, through conformational rearrangements of the heterodimer required for fusion rather than a classical class II fusion mechanism. The interaction between envelope glycoprotein E2 and host apolipoprotein E/APOE allows the proper assembly, maturation and infectivity of the viral particles. This interaction is probably promoted via the up-regulation of cellular autophagy by the virus. E1/E2 heterodimer binds host apolipoproteins such as APOB and APOE thereby forming a lipo-viro-particle (LVP). APOE associated to the LVP allows the initial virus attachment to cell surface receptors such as the heparan sulfate proteoglycans (HSPGs), syndecan-1 (SDC1), syndecan-1 (SDC2), the low-density lipoprotein receptor (LDLR) and scavenger receptor class B type I (SCARB1). The cholesterol transfer activity of SCARB1 allows E2 exposure and binding of E2 to SCARB1 and the tetraspanin CD81. E1/E2 heterodimer binding on CD81 activates the epithelial growth factor receptor (EGFR) signaling pathway. Diffusion of the complex E1-E2-EGFR-SCARB1-CD81 to the cell lateral membrane allows further interaction with Claudin 1 (CLDN1) and occludin (OCLN) to finally trigger HCV entry. Inhibits host EIF2AK2/PKR activation, preventing the establishment of an antiviral state. Viral ligand for CD209/DC-SIGN and CLEC4M/DC-SIGNR, which are respectively found on dendritic cells (DCs), and on liver sinusoidal endothelial cells and macrophage-like cells of lymph node sinuses. These interactions allow the capture of circulating HCV particles by these cells and subsequent facilitated transmission to permissive cells such as hepatocytes and lymphocyte subpopulations. The interaction between E2 and host amino acid transporter complex formed by SLC3A2 and SLC7A5/LAT1 may facilitate viral entry into host cell. Its function is as follows. Ion channel protein that acts as a viroporin and plays an essential role in the assembly, envelopment and secretion of viral particles. Regulates the host cell secretory pathway, which induces the intracellular retention of viral glycoproteins and favors assembly of viral particles. Creates a pore in acidic organelles and releases Ca(2+) and H(+) in the cytoplasm of infected cells, leading to a productive viral infection. High levels of cytoplasmic Ca(2+) may trigger membrane trafficking and transport of viral ER-associated proteins to viroplasms, sites of viral genome replication. This ionic imbalance induces the assembly of the inflammasome complex, which triggers the maturation of pro-IL-1beta into IL-1beta through the action of caspase-1. Targets also host mitochondria and induces mitochondrial depolarization. In addition of its role as a viroporin, acts as a lipid raft adhesion factor. In terms of biological role, cysteine protease required for the proteolytic auto-cleavage between the non-structural proteins NS2 and NS3. The N-terminus of NS3 is required for the function of NS2 protease (active region NS2-3). Promotes the initiation of viral particle assembly by mediating the interaction between structural and non-structural proteins. Displays three enzymatic activities: serine protease with a chymotrypsin-like fold, NTPase and RNA helicase. NS3 serine protease, in association with NS4A, is responsible for the cleavages of NS3-NS4A, NS4A-NS4B, NS4B-NS5A and NS5A-NS5B. The NS3/NS4A complex prevents phosphorylation of host IRF3, thus preventing the establishment of dsRNA induced antiviral state. The NS3/NS4A complex induces host amino acid transporter component SLC3A2, thus contributing to HCV propagation. NS3 RNA helicase binds to RNA and unwinds both dsDNA and dsRNA in the 3' to 5' direction, and likely resolves RNA complicated stable secondary structures in the template strand. Binds a single ATP and catalyzes the unzipping of a single base pair of dsRNA. Inhibits host antiviral proteins TBK1 and IRF3 thereby preventing the establishment of an antiviral state. Cleaves host MAVS/CARDIF thereby preventing the establishment of an antiviral state. Cleaves host TICAM1/TRIF, thereby disrupting TLR3 signaling and preventing the establishment of an antiviral state. Functionally, induces a specific membrane alteration that serves as a scaffold for the virus replication complex. This membrane alteration gives rise to the so-called ER-derived membranous web that contains the replication complex. NS4B self-interaction contributes to its function in membranous web formation. Promotes host TRIF protein degradation in a CASP8-dependent manner thereby inhibiting host TLR3-mediated interferon signaling. Disrupts the interaction between STING and TBK1 contributing to the inhibition of interferon signaling. Its function is as follows. Phosphorylated protein that is indispensable for viral replication and assembly. Both hypo- and hyperphosphorylated states are required for the viral life cycle. The hyperphosphorylated form of NS5A is an inhibitor of viral replication. Involved in RNA-binding and especially in binding to the viral genome. Zinc is essential for RNA-binding. Participates in the viral particle production as a result of its interaction with the mature viral core protein. Its interaction with host VAPB may target the viral replication complex to vesicles. Down-regulates viral IRES translation initiation. Mediates interferon resistance, presumably by interacting with and inhibiting host EIF2AK2/PKR. Prevents BIN1-induced apoptosis. Acts as a transcriptional activator of some host genes important for viral replication when localized in the nucleus. Via the interaction with host PACSIN2, modulates lipid droplet formation in order to promote virion assembly. Modulates TNFRSF21/DR6 signaling pathway for viral propagation. In terms of biological role, RNA-dependent RNA polymerase that performs primer-template recognition and RNA synthesis during viral replication. Initiates RNA transcription/replication at a flavin adenine dinucleotide (FAD), resulting in a 5'- FAD cap on viral RNAs. In this way, recognition of viral 5' RNA by host pattern recognition receptors can be bypassed, thereby evading activation of antiviral pathways. This chain is Genome polyprotein, found in Hepatitis C virus genotype 6a (isolate EUHK2) (HCV).